The sequence spans 190 residues: UPF0301 protein Rmet_2743 (190 aa).

This sequence belongs to the UPF0301 (AlgH) family.

The sequence is that of UPF0301 protein Rmet_2743 from Cupriavidus metallidurans (strain ATCC 43123 / DSM 2839 / NBRC 102507 / CH34) (Ralstonia metallidurans).